Reading from the N-terminus, the 71-residue chain is General transcription factor IIH subunit 5 (71 aa).

T69 is subject to Phosphothreonine.

It belongs to the TFB5 family. As to quaternary structure, component of the 7-subunit TFIIH core complex composed of XPB/ERCC3, XPD/ERCC2, GTF2H1, GTF2H2, GTF2H3, GTF2H4 and GTF2H5, which is active in NER. The core complex associates with the 3-subunit CDK-activating kinase (CAK) module composed of CCNH/cyclin H, CDK7 and MNAT1 to form the 10-subunit holoenzyme (holo-TFIIH) active in transcription. Part of TBP-based Pol II pre-initiation complex (PIC), in which Pol II core assembles with general transcription factors and other specific initiation factors including GTF2E1, GTF2E2, GTF2F1, GTF2F2, TCEA1, ERCC2, ERCC3, GTF2H2, GTF2H3, GTF2H4, GTF2H5, GTF2A1, GTF2A2, GTF2B and TBP; this large multi-subunit PIC complex mediates DNA unwinding and targets Pol II core to the transcription start site where the first phosphodiester bond forms.

The protein resides in the nucleus. Its subcellular location is the cytoplasm. In terms of biological role, component of the general transcription and DNA repair factor IIH (TFIIH) core complex, which is involved in general and transcription-coupled nucleotide excision repair (NER) of damaged DNA and, when complexed to CAK, in RNA transcription by RNA polymerase II. In NER, TFIIH acts by opening DNA around the lesion to allow the excision of the damaged oligonucleotide and its replacement by a new DNA fragment. In transcription, TFIIH has an essential role in transcription initiation. When the pre-initiation complex (PIC) has been established, TFIIH is required for promoter opening and promoter escape. Phosphorylation of the C-terminal tail (CTD) of the largest subunit of RNA polymerase II by the kinase module CAK controls the initiation of transcription. Necessary for the stability of the TFIIH complex and for the presence of normal levels of TFIIH in the cell. The protein is General transcription factor IIH subunit 5 of Homo sapiens (Human).